We begin with the raw amino-acid sequence, 530 residues long: Ubiquitin carboxyl-terminal hydrolase 17-like protein 10 (530 aa).

The USP domain occupies 80–375 (AGLQNMGNTC…QAYVLFYIQK (296 aa)). Cys-89 acts as the Nucleophile in catalysis. His-334 (proton acceptor) is an active-site residue. 2 stretches are compositionally biased toward basic and acidic residues: residues 382 to 392 (SESVSRGREPR) and 398 to 410 (DTDR…ELKR). 2 disordered regions span residues 382–410 (SESV…ELKR) and 477–530 (NHHP…LVCQ). Residues 484–495 (SSLLNLSSTTPT) show a composition bias toward low complexity. Residues 496–505 (DQESMNTGTL) show a composition bias toward polar residues. Over residues 510 to 524 (GRTRRSKGKNKHSKR) the composition is skewed to basic residues.

It belongs to the peptidase C19 family. USP17 subfamily.

Its subcellular location is the nucleus. It is found in the endoplasmic reticulum. The catalysed reaction is Thiol-dependent hydrolysis of ester, thioester, amide, peptide and isopeptide bonds formed by the C-terminal Gly of ubiquitin (a 76-residue protein attached to proteins as an intracellular targeting signal).. Its function is as follows. Deubiquitinating enzyme that removes conjugated ubiquitin from specific proteins to regulate different cellular processes that may include cell proliferation, progression through the cell cycle, apoptosis, cell migration, and the cellular response to viral infection. The sequence is that of Ubiquitin carboxyl-terminal hydrolase 17-like protein 10 (USP17L10) from Homo sapiens (Human).